A 156-amino-acid polypeptide reads, in one-letter code: Small ribosomal subunit protein uS7 (156 aa).

It belongs to the universal ribosomal protein uS7 family. In terms of assembly, part of the 30S ribosomal subunit. Contacts proteins S9 and S11.

One of the primary rRNA binding proteins, it binds directly to 16S rRNA where it nucleates assembly of the head domain of the 30S subunit. Is located at the subunit interface close to the decoding center, probably blocks exit of the E-site tRNA. The sequence is that of Small ribosomal subunit protein uS7 from Nitrosomonas europaea (strain ATCC 19718 / CIP 103999 / KCTC 2705 / NBRC 14298).